A 364-amino-acid polypeptide reads, in one-letter code: Phosphoserine aminotransferase (364 aa).

Arg46 lines the L-glutamate pocket. Pyridoxal 5'-phosphate is bound by residues 80–81 (AR), Trp106, Thr157, Asp176, and Gln199. Lys200 is modified (N6-(pyridoxal phosphate)lysine). 241–242 (NT) contributes to the pyridoxal 5'-phosphate binding site.

Belongs to the class-V pyridoxal-phosphate-dependent aminotransferase family. SerC subfamily. Homodimer. Pyridoxal 5'-phosphate serves as cofactor.

Its subcellular location is the cytoplasm. The catalysed reaction is O-phospho-L-serine + 2-oxoglutarate = 3-phosphooxypyruvate + L-glutamate. It carries out the reaction 4-(phosphooxy)-L-threonine + 2-oxoglutarate = (R)-3-hydroxy-2-oxo-4-phosphooxybutanoate + L-glutamate. The protein operates within amino-acid biosynthesis; L-serine biosynthesis; L-serine from 3-phospho-D-glycerate: step 2/3. Its pathway is cofactor biosynthesis; pyridoxine 5'-phosphate biosynthesis; pyridoxine 5'-phosphate from D-erythrose 4-phosphate: step 3/5. In terms of biological role, catalyzes the reversible conversion of 3-phosphohydroxypyruvate to phosphoserine and of 3-hydroxy-2-oxo-4-phosphonooxybutanoate to phosphohydroxythreonine. This chain is Phosphoserine aminotransferase, found in Vibrio cholerae serotype O1 (strain ATCC 39315 / El Tor Inaba N16961).